The primary structure comprises 324 residues: Leucine carboxyl methyltransferase 1 (324 aa).

S-adenosyl-L-methionine contacts are provided by residues Arg74, Gly101, Asp128, 172 to 173 (DL), and Glu196.

The protein belongs to the methyltransferase superfamily. LCMT family.

The enzyme catalyses [phosphatase 2A protein]-C-terminal L-leucine + S-adenosyl-L-methionine = [phosphatase 2A protein]-C-terminal L-leucine methyl ester + S-adenosyl-L-homocysteine. Its function is as follows. Methylates the carboxyl group of the C-terminal leucine residue of protein phosphatase 2A catalytic subunits to form alpha-leucine ester residues. The sequence is that of Leucine carboxyl methyltransferase 1 (PPM1) from Yarrowia lipolytica (strain CLIB 122 / E 150) (Yeast).